A 176-amino-acid chain; its full sequence is Inorganic pyrophosphatase (176 aa).

Substrate is bound by residues K30, R44, and Y56. Positions 66, 71, and 103 each coordinate Mg(2+). A substrate-binding site is contributed by Y142.

It belongs to the PPase family. In terms of assembly, homohexamer. Mg(2+) serves as cofactor.

The protein localises to the cytoplasm. It carries out the reaction diphosphate + H2O = 2 phosphate + H(+). Catalyzes the hydrolysis of inorganic pyrophosphate (PPi) forming two phosphate ions. In Aeropyrum pernix (strain ATCC 700893 / DSM 11879 / JCM 9820 / NBRC 100138 / K1), this protein is Inorganic pyrophosphatase.